The primary structure comprises 256 residues: Small ribosomal subunit protein uS2 (256 aa).

This sequence belongs to the universal ribosomal protein uS2 family.

This chain is Small ribosomal subunit protein uS2, found in Streptococcus equi subsp. equi (strain 4047).